Reading from the N-terminus, the 440-residue chain is Branched-chain amino acid permease BrnQ (440 aa).

Helical transmembrane passes span 9-29, 46-66, 80-100, 121-141, 149-169, 196-216, 227-247, 284-304, 321-341, 348-368, 378-398, and 414-434; these read YIII…NLIF, AGFL…FVFS, PVFG…FFAI, SPVS…LLSL, IVGK…VAVA, GYLT…VNAL, LIVV…VMYT, ILLG…LITA, IAVV…TQLI, LLTM…HSVF, SLLF…GIKI, and IGLG…ILSI.

It belongs to the branched chain amino acid transporter family.

The protein resides in the cell membrane. Branched-chain amino acid transport system which is involved in the uptake of isoleucine and valine. Probably does not transport leucine. Together with BcaP and BraB, plays an important role in the activation of CodY, a branched-chain amino acid-responsive transcriptional regulator that controls the expression of several dozen transcription units in B.subtilis. This is Branched-chain amino acid permease BrnQ from Bacillus subtilis (strain 168).